The chain runs to 240 residues: Ribosomal RNA small subunit methyltransferase G (240 aa).

Residues glycine 78, phenylalanine 83, 129–130 (AE), and arginine 147 each bind S-adenosyl-L-methionine. A disordered region spans residues 218–240 (RRQTSKKYPRKPGTPNKSPLLEN).

The protein belongs to the methyltransferase superfamily. RNA methyltransferase RsmG family.

It localises to the cytoplasm. In terms of biological role, specifically methylates the N7 position of guanine in position 535 of 16S rRNA. The polypeptide is Ribosomal RNA small subunit methyltransferase G (Staphylococcus haemolyticus (strain JCSC1435)).